Consider the following 295-residue polypeptide: Hepatic leukemia factor (295 aa).

Basic and acidic residues predominate over residues glutamate 37 to aspartate 52. Disordered regions lie at residues glutamate 37–tryptophan 70 and serine 93–aspartate 167. One can recognise a bZIP domain in the interval aspartate 225–tyrosine 288. Residues lysine 227–arginine 247 are basic motif. The interval leucine 248–isoleucine 255 is leucine-zipper.

Belongs to the bZIP family. PAR subfamily. In terms of assembly, binds DNA specifically as homodimer or heterodimer with other PAR factors. In terms of tissue distribution, highly expressed in liver; lower levels in lung and kidney.

The protein localises to the nucleus. This chain is Hepatic leukemia factor (HLF), found in Homo sapiens (Human).